Here is a 1236-residue protein sequence, read N- to C-terminus: ABC transporter B family member 9 (1236 aa).

In terms of domain architecture, ABC transmembrane type-1 1 spans 33-320; that stretch reads MTVGTIAAAG…TSPSLNAFAA (288 aa). The next 6 membrane-spanning stretches (helical) occupy residues 38–58, 80–100, 158–178, 179–199, 257–277, and 288–308; these read IAAAGNGLTQPFMTLIFGQLI, FIYLAVYSCVVAFLQVSCWMV, QLLCTFLGGFAIAFYKGPLLA, GVLCSCIPLIVIAGAAMSLIM, ISGFGLGTMLAVIFCSYGLAV, and GYNGGQVINVIFAVLTGGMSL. Residues 355 to 591 enclose the ABC transporter 1 domain; it reads IELKDVYFRY…PEGAYSQLVR (237 aa). 390–397 is an ATP binding site; the sequence is GQSGSGKS. The N-linked (GlcNAc...) asparagine glycan is linked to asparagine 542. Residues 593-616 form a disordered region; that stretch reads QEGSKEEATESERPETSLDVERSG. The segment covering 594–616 has biased composition (basic and acidic residues); sequence EGSKEEATESERPETSLDVERSG. N-linked (GlcNAc...) asparagine glycans are attached at residues asparagine 631 and asparagine 653. Transmembrane regions (helical) follow at residues 685 to 705, 725 to 745, 785 to 805, 806 to 826, 902 to 922, and 927 to 947; these read VLVLGSIAAMVHGTVFPIFGL, SHFWALIYIALGLTNFVMIPV, SLVGDALALIVQNIATVTTGL, IIAFTANWILALIVLALSPFI, FSFFFLYCINCVCFVSGAGLI, and ATFGEVFKVFFALTIMAIGVS. An ABC transmembrane type-1 2 domain is found at 686–958; the sequence is LVLGSIAAMV…TSAMAPDSNK (273 aa). In terms of domain architecture, ABC transporter 2 spans 993-1230; the sequence is IEFRHVSFRY…SGGAYASLVT (238 aa). 1028-1035 contacts ATP; it reads GESGSGKS. N-linked (GlcNAc...) asparagine glycans are attached at residues asparagine 1082 and asparagine 1181.

It belongs to the ABC transporter superfamily. ABCB family. Multidrug resistance exporter (TC 3.A.1.201) subfamily.

The protein localises to the membrane. The chain is ABC transporter B family member 9 (ABCB9) from Arabidopsis thaliana (Mouse-ear cress).